Reading from the N-terminus, the 194-residue chain is MTLFLRIFTFGCLLLLAGCTTTQPQRDQVNWQKERTRLEQLSHWQLSGKMAIITVQQKGSARVNWQQNGDDYRLNLTSLIGTHILELSRSNGEITLIDNEGNPHQSQDAEALIYQLTGWNIPVQGLPEWIKGLPGKAEFELNPDSSLASVRDGQWQIVYGDYRDQDGYRLPHLLTMTGQGSRLKLQINQWTLAR.

The signal sequence occupies residues 1–18; sequence MTLFLRIFTFGCLLLLAG. Cys19 is lipidated: N-palmitoyl cysteine. Cys19 carries S-diacylglycerol cysteine lipidation.

The protein belongs to the LolB family. As to quaternary structure, monomer.

It localises to the cell outer membrane. Functionally, plays a critical role in the incorporation of lipoproteins in the outer membrane after they are released by the LolA protein. The polypeptide is Outer-membrane lipoprotein LolB (Aeromonas salmonicida (strain A449)).